We begin with the raw amino-acid sequence, 502 residues long: Cytochrome P450 71A8 (502 aa).

The helical transmembrane segment at I16–T36 threads the bilayer. The disordered stretch occupies residues P93–S119. Heme is bound at residue C447.

Belongs to the cytochrome P450 family. The cofactor is heme.

It localises to the membrane. The sequence is that of Cytochrome P450 71A8 (CYP71A8) from Mentha piperita (Peppermint).